A 200-amino-acid chain; its full sequence is Recombination protein RecR (200 aa).

The C4-type zinc finger occupies 59 to 74 (CSTCGSLDTQDPCAIC). The region spanning 82–177 (SLICVVEEVG…TVSMLARGVP (96 aa)) is the Toprim domain.

It belongs to the RecR family.

In terms of biological role, may play a role in DNA repair. It seems to be involved in an RecBC-independent recombinational process of DNA repair. It may act with RecF and RecO. This Phenylobacterium zucineum (strain HLK1) protein is Recombination protein RecR.